Consider the following 222-residue polypeptide: Type II restriction enzyme MjaI (222 aa).

The catalysed reaction is Endonucleolytic cleavage of DNA to give specific double-stranded fragments with terminal 5'-phosphates.. Its function is as follows. A P subtype restriction enzyme that recognizes the double-stranded sequence 5'-CTAG-3'; the cleavage site is unknown. This chain is Type II restriction enzyme MjaI (mjaIR), found in Methanocaldococcus jannaschii (strain ATCC 43067 / DSM 2661 / JAL-1 / JCM 10045 / NBRC 100440) (Methanococcus jannaschii).